Consider the following 106-residue polypeptide: Large ribosomal subunit protein bL21c (106 aa).

This sequence belongs to the bacterial ribosomal protein bL21 family. In terms of assembly, part of the 50S ribosomal subunit.

Its subcellular location is the plastid. It localises to the chloroplast. Its function is as follows. This protein binds to 23S rRNA. This is Large ribosomal subunit protein bL21c from Gracilaria tenuistipitata var. liui (Red alga).